We begin with the raw amino-acid sequence, 137 residues long: Phosphoribosyl-AMP cyclohydrolase (137 aa).

Residue aspartate 84 coordinates Mg(2+). Cysteine 85 serves as a coordination point for Zn(2+). Residues aspartate 86 and aspartate 88 each coordinate Mg(2+). Residues cysteine 101 and cysteine 108 each coordinate Zn(2+).

This sequence belongs to the PRA-CH family. Homodimer. It depends on Mg(2+) as a cofactor. The cofactor is Zn(2+).

It is found in the cytoplasm. It catalyses the reaction 1-(5-phospho-beta-D-ribosyl)-5'-AMP + H2O = 1-(5-phospho-beta-D-ribosyl)-5-[(5-phospho-beta-D-ribosylamino)methylideneamino]imidazole-4-carboxamide. It participates in amino-acid biosynthesis; L-histidine biosynthesis; L-histidine from 5-phospho-alpha-D-ribose 1-diphosphate: step 3/9. Its function is as follows. Catalyzes the hydrolysis of the adenine ring of phosphoribosyl-AMP. This chain is Phosphoribosyl-AMP cyclohydrolase, found in Chlorobium chlorochromatii (strain CaD3).